Reading from the N-terminus, the 165-residue chain is Large ribosomal subunit protein uL10 (165 aa).

This sequence belongs to the universal ribosomal protein uL10 family. Part of the ribosomal stalk of the 50S ribosomal subunit. The N-terminus interacts with L11 and the large rRNA to form the base of the stalk. The C-terminus forms an elongated spine to which L12 dimers bind in a sequential fashion forming a multimeric L10(L12)X complex.

In terms of biological role, forms part of the ribosomal stalk, playing a central role in the interaction of the ribosome with GTP-bound translation factors. The sequence is that of Large ribosomal subunit protein uL10 from Cronobacter sakazakii (strain ATCC BAA-894) (Enterobacter sakazakii).